Consider the following 86-residue polypeptide: RNA-binding protein Hfq (86 aa).

Residues 9–68 enclose the Sm domain; that stretch reads DPYLNTLRKEKVPVSIYLVNGIKLQGSIESFDQFVVLLKNTVSQMVYKHAISTVVPARPV. The tract at residues 66–86 is disordered; that stretch reads RPVRLPSPSDSEHGDSEPGNA. A compositionally biased stretch (basic and acidic residues) spans 75–86; the sequence is DSEHGDSEPGNA.

The protein belongs to the Hfq family. As to quaternary structure, homohexamer.

RNA chaperone that binds small regulatory RNA (sRNAs) and mRNAs to facilitate mRNA translational regulation in response to envelope stress, environmental stress and changes in metabolite concentrations. Also binds with high specificity to tRNAs. The polypeptide is RNA-binding protein Hfq (Pseudomonas putida (strain W619)).